Here is a 34-residue protein sequence, read N- to C-terminus: Photosystem II reaction center protein Psb30 (34 aa).

The chain crosses the membrane as a helical span at residues Val-6–Leu-26.

It belongs to the Psb30/Ycf12 family. As to quaternary structure, PSII is composed of 1 copy each of membrane proteins PsbA, PsbB, PsbC, PsbD, PsbE, PsbF, PsbH, PsbI, PsbJ, PsbK, PsbL, PsbM, PsbT, PsbX, PsbY, PsbZ, Psb30/Ycf12, peripheral proteins of the oxygen-evolving complex and a large number of cofactors. It forms dimeric complexes.

Its subcellular location is the plastid. It is found in the chloroplast thylakoid membrane. In terms of biological role, a core subunit of photosystem II (PSII), probably helps stabilize the reaction center. The protein is Photosystem II reaction center protein Psb30 of Thalassiosira pseudonana (Marine diatom).